A 396-amino-acid chain; its full sequence is 1-deoxy-D-xylulose 5-phosphate reductoisomerase (396 aa).

NADPH contacts are provided by Thr-13, Gly-14, Ser-15, Val-16, and Asn-127. Position 128 (Lys-128) interacts with 1-deoxy-D-xylulose 5-phosphate. Residue Glu-129 coordinates NADPH. Mn(2+) is bound at residue Asp-153. 1-deoxy-D-xylulose 5-phosphate-binding residues include Ser-154, Glu-155, Ser-184, and His-207. Glu-155 contacts Mn(2+). Gly-213 serves as a coordination point for NADPH. 1-deoxy-D-xylulose 5-phosphate-binding residues include Ser-220, Asn-225, Lys-226, and Glu-229. Residue Glu-229 coordinates Mn(2+).

This sequence belongs to the DXR family. It depends on Mg(2+) as a cofactor. The cofactor is Mn(2+).

The enzyme catalyses 2-C-methyl-D-erythritol 4-phosphate + NADP(+) = 1-deoxy-D-xylulose 5-phosphate + NADPH + H(+). It participates in isoprenoid biosynthesis; isopentenyl diphosphate biosynthesis via DXP pathway; isopentenyl diphosphate from 1-deoxy-D-xylulose 5-phosphate: step 1/6. Catalyzes the NADPH-dependent rearrangement and reduction of 1-deoxy-D-xylulose-5-phosphate (DXP) to 2-C-methyl-D-erythritol 4-phosphate (MEP). This is 1-deoxy-D-xylulose 5-phosphate reductoisomerase from Pseudomonas fluorescens (strain SBW25).